The chain runs to 250 residues: uncharacterized protein (250 aa).

It belongs to the glycosyltransferase 2 family.

This is an uncharacterized protein from Haemophilus influenzae (strain ATCC 51907 / DSM 11121 / KW20 / Rd).